The following is a 263-amino-acid chain: Izumo sperm-egg fusion protein 3 (263 aa).

The first 22 residues, 1–22 (MGDLWVLLFSSLSLAAFHGVRG), serve as a signal peptide directing secretion. Residues 23–176 (CLECDPKFTE…EDPKTAENRE (154 aa)) are Extracellular-facing. N-linked (GlcNAc...) asparagine glycans are attached at residues Asn98 and Asn128. Residues 177-197 (ISLYLIFIAEAVILASAVLLF) traverse the membrane as a helical segment. Residues 198–263 (HVCISHRRKM…CAESEMQTGT (66 aa)) lie on the Cytoplasmic side of the membrane. The disordered stretch occupies residues 241-263 (GRSNSNSLTGEPTCAESEMQTGT).

The protein belongs to the Izumo family. Monomer and homodimer. In terms of tissue distribution, sperm-specific (at protein level).

Its subcellular location is the cell membrane. The protein resides in the cytoplasmic vesicle. The protein localises to the secretory vesicle. It localises to the acrosome inner membrane. Plays an important role in the biogenesis of the acrosome during sperm development. The chain is Izumo sperm-egg fusion protein 3 (Izumo3) from Mus musculus (Mouse).